Consider the following 249-residue polypeptide: MEEIVIVGRHAVKEAIVSGHTINKILIQDTIKKGQINEILKLANSNKIIVQSVPKSKIDGLSDSPHQGVAAYIAPYEYADFDAFVAQQKAQDKLSTVLILDGLEDPHNLGSILRTADASGVDGVIIPKRRSVALTQTVAKASTGAIQHIPVMRVTNLANTIETLKDNGYWIVGTEAENSTDYREMDAGMPLGIVIGSEGQGMSRLVKEKCDFYINIPMVGHVNSLNASVAASLMMYEVFRKRNYIGDKA.

S-adenosyl-L-methionine is bound by residues G196, I216, and L225.

It belongs to the class IV-like SAM-binding methyltransferase superfamily. RNA methyltransferase TrmH family.

The sequence is that of Putative TrmH family tRNA/rRNA methyltransferase from Staphylococcus saprophyticus subsp. saprophyticus (strain ATCC 15305 / DSM 20229 / NCIMB 8711 / NCTC 7292 / S-41).